Consider the following 472-residue polypeptide: tRNA-2-methylthio-N(6)-dimethylallyladenosine synthase (472 aa).

An MTTase N-terminal domain is found at 22–138 (RSYWITTFGC…LETLLQQVDS (117 aa)). Cysteine 31, cysteine 67, cysteine 101, cysteine 173, cysteine 177, and cysteine 180 together coordinate [4Fe-4S] cluster. The region spanning 159–396 (RDSAICGWVN…NALVERNARE (238 aa)) is the Radical SAM core domain. One can recognise a TRAM domain in the interval 399 to 467 (IRYQGRTEEV…SFSLSGTPLP (69 aa)).

The protein belongs to the methylthiotransferase family. MiaB subfamily. As to quaternary structure, monomer. Requires [4Fe-4S] cluster as cofactor.

The protein localises to the cytoplasm. The catalysed reaction is N(6)-dimethylallyladenosine(37) in tRNA + (sulfur carrier)-SH + AH2 + 2 S-adenosyl-L-methionine = 2-methylsulfanyl-N(6)-dimethylallyladenosine(37) in tRNA + (sulfur carrier)-H + 5'-deoxyadenosine + L-methionine + A + S-adenosyl-L-homocysteine + 2 H(+). Its function is as follows. Catalyzes the methylthiolation of N6-(dimethylallyl)adenosine (i(6)A), leading to the formation of 2-methylthio-N6-(dimethylallyl)adenosine (ms(2)i(6)A) at position 37 in tRNAs that read codons beginning with uridine. The chain is tRNA-2-methylthio-N(6)-dimethylallyladenosine synthase from Synechococcus sp. (strain CC9902).